The primary structure comprises 378 residues: Erythronate-4-phosphate dehydrogenase (378 aa).

The substrate site is built by Ser-45 and Thr-66. 2 residues coordinate NAD(+): Asp-146 and Thr-175. The active site involves Arg-208. Asp-232 contributes to the NAD(+) binding site. The active site involves Glu-237. His-254 (proton donor) is an active-site residue. Gly-257 contacts NAD(+). Tyr-258 lines the substrate pocket.

The protein belongs to the D-isomer specific 2-hydroxyacid dehydrogenase family. PdxB subfamily. As to quaternary structure, homodimer.

The protein resides in the cytoplasm. The enzyme catalyses 4-phospho-D-erythronate + NAD(+) = (R)-3-hydroxy-2-oxo-4-phosphooxybutanoate + NADH + H(+). Its pathway is cofactor biosynthesis; pyridoxine 5'-phosphate biosynthesis; pyridoxine 5'-phosphate from D-erythrose 4-phosphate: step 2/5. Functionally, catalyzes the oxidation of erythronate-4-phosphate to 3-hydroxy-2-oxo-4-phosphonooxybutanoate. In Salmonella agona (strain SL483), this protein is Erythronate-4-phosphate dehydrogenase.